A 969-amino-acid polypeptide reads, in one-letter code: Protein translocase subunit SecA (969 aa).

Residues glutamine 99, 117-121 (GEGKT), and aspartate 631 contribute to the ATP site.

This sequence belongs to the SecA family. Monomer and homodimer. Part of the essential Sec protein translocation apparatus which comprises SecA, SecYEG and auxiliary proteins SecDF. Other proteins may also be involved.

It localises to the cell inner membrane. It is found in the cytoplasm. The catalysed reaction is ATP + H2O + cellular proteinSide 1 = ADP + phosphate + cellular proteinSide 2.. Its function is as follows. Part of the Sec protein translocase complex. Interacts with the SecYEG preprotein conducting channel. Has a central role in coupling the hydrolysis of ATP to the transfer of proteins into and across the cell membrane, serving as an ATP-driven molecular motor driving the stepwise translocation of polypeptide chains across the membrane. This chain is Protein translocase subunit SecA, found in Chlamydia trachomatis serovar A (strain ATCC VR-571B / DSM 19440 / HAR-13).